Reading from the N-terminus, the 393-residue chain is uncharacterized protein (393 aa).

In terms of domain architecture, TRAM spans 12–70; the sequence is APLLGSKIKLNIEKLAIGGAGVARHEGMVVFVPQAAPNEEILAEITLVKKNFMEARVVE. The [4Fe-4S] cluster site is built by C83, C89, C92, and C166. S-adenosyl-L-methionine-binding residues include Q221, Y250, E273, and D316. C343 serves as the catalytic Nucleophile.

Belongs to the class I-like SAM-binding methyltransferase superfamily. RNA M5U methyltransferase family.

This is an uncharacterized protein from Bdellovibrio bacteriovorus (strain ATCC 15356 / DSM 50701 / NCIMB 9529 / HD100).